The primary structure comprises 336 residues: Pyridoxal 5'-phosphate synthase subunit PdxS (336 aa).

Residue Asp-30 participates in D-ribose 5-phosphate binding. The active-site Schiff-base intermediate with D-ribose 5-phosphate is Lys-87. Gly-159 lines the D-ribose 5-phosphate pocket. Arg-171 is a D-glyceraldehyde 3-phosphate binding site. Residues Gly-257 and 278-279 each bind D-ribose 5-phosphate; that span reads GS.

It belongs to the PdxS/SNZ family. As to quaternary structure, in the presence of PdxT, forms a dodecamer of heterodimers.

The enzyme catalyses aldehydo-D-ribose 5-phosphate + D-glyceraldehyde 3-phosphate + L-glutamine = pyridoxal 5'-phosphate + L-glutamate + phosphate + 3 H2O + H(+). It participates in cofactor biosynthesis; pyridoxal 5'-phosphate biosynthesis. In terms of biological role, catalyzes the formation of pyridoxal 5'-phosphate from ribose 5-phosphate (RBP), glyceraldehyde 3-phosphate (G3P) and ammonia. The ammonia is provided by the PdxT subunit. Can also use ribulose 5-phosphate and dihydroxyacetone phosphate as substrates, resulting from enzyme-catalyzed isomerization of RBP and G3P, respectively. The sequence is that of Pyridoxal 5'-phosphate synthase subunit PdxS from Thermoplasma volcanium (strain ATCC 51530 / DSM 4299 / JCM 9571 / NBRC 15438 / GSS1).